A 152-amino-acid chain; its full sequence is Protein SprT-like (152 aa).

In terms of domain architecture, SprT-like spans 7-147; the sequence is QRLVEEVSLQ…CGKCKGKLKP (141 aa). Residue His67 coordinates Zn(2+). Glu68 is an active-site residue. His71 serves as a coordination point for Zn(2+).

It belongs to the SprT family. Zn(2+) serves as cofactor.

The protein resides in the cytoplasm. The protein is Protein SprT-like of Bacillus cereus (strain ATCC 14579 / DSM 31 / CCUG 7414 / JCM 2152 / NBRC 15305 / NCIMB 9373 / NCTC 2599 / NRRL B-3711).